A 954-amino-acid chain; its full sequence is Glycine dehydrogenase (decarboxylating) (954 aa).

An N6-(pyridoxal phosphate)lysine modification is found at Lys700.

Belongs to the GcvP family. In terms of assembly, the glycine cleavage system is composed of four proteins: P, T, L and H. It depends on pyridoxal 5'-phosphate as a cofactor.

It catalyses the reaction N(6)-[(R)-lipoyl]-L-lysyl-[glycine-cleavage complex H protein] + glycine + H(+) = N(6)-[(R)-S(8)-aminomethyldihydrolipoyl]-L-lysyl-[glycine-cleavage complex H protein] + CO2. In terms of biological role, the glycine cleavage system catalyzes the degradation of glycine. The P protein binds the alpha-amino group of glycine through its pyridoxal phosphate cofactor; CO(2) is released and the remaining methylamine moiety is then transferred to the lipoamide cofactor of the H protein. The protein is Glycine dehydrogenase (decarboxylating) of Dinoroseobacter shibae (strain DSM 16493 / NCIMB 14021 / DFL 12).